The sequence spans 444 residues: ATPase PAAT (444 aa).

4 positions are modified to phosphoserine: Ser-177, Ser-182, Ser-254, and Ser-302. The interval 424–444 is disordered; sequence PSPGMPLRHYDSRERLSNGER. The segment covering 431–444 has biased composition (basic and acidic residues); it reads RHYDSRERLSNGER.

In terms of assembly, homodimer. Interacts with ABCB7, ABCB8/MITOSUR and ABCB10.

Its subcellular location is the cytoplasm. The protein resides in the mitochondrion. The catalysed reaction is ATP + H2O = ADP + phosphate + H(+). Its function is as follows. ATPase that regulates mitochondrial ABC transporters ABCB7, ABCB8/MITOSUR and ABCB10. Regulates mitochondrial ferric concentration and heme biosynthesis and plays a role in the maintenance of mitochondrial homeostasis and cell survival. This chain is ATPase PAAT, found in Rattus norvegicus (Rat).